Consider the following 180-residue polypeptide: Large ribosomal subunit protein uL5 (180 aa).

The protein belongs to the universal ribosomal protein uL5 family. In terms of assembly, part of the 50S ribosomal subunit; part of the 5S rRNA/L5/L18/L25 subcomplex. Contacts the 5S rRNA and the P site tRNA. Forms a bridge to the 30S subunit in the 70S ribosome.

Its function is as follows. This is one of the proteins that bind and probably mediate the attachment of the 5S RNA into the large ribosomal subunit, where it forms part of the central protuberance. In the 70S ribosome it contacts protein S13 of the 30S subunit (bridge B1b), connecting the 2 subunits; this bridge is implicated in subunit movement. Contacts the P site tRNA; the 5S rRNA and some of its associated proteins might help stabilize positioning of ribosome-bound tRNAs. This chain is Large ribosomal subunit protein uL5, found in Cupriavidus metallidurans (strain ATCC 43123 / DSM 2839 / NBRC 102507 / CH34) (Ralstonia metallidurans).